The primary structure comprises 588 residues: Aspartate--tRNA ligase (588 aa).

Glutamate 177 contacts L-aspartate. The interval 201–204 is aspartate; it reads QLFK. Position 223 (arginine 223) interacts with L-aspartate. ATP contacts are provided by residues 223–225 and glutamine 232; that span reads RDE. Histidine 451 is a binding site for L-aspartate. Glutamate 485 is an ATP binding site. L-aspartate is bound at residue arginine 492. 537–540 lines the ATP pocket; the sequence is GLDR.

This sequence belongs to the class-II aminoacyl-tRNA synthetase family. Type 1 subfamily. In terms of assembly, homodimer.

It localises to the cytoplasm. The catalysed reaction is tRNA(Asp) + L-aspartate + ATP = L-aspartyl-tRNA(Asp) + AMP + diphosphate. Functionally, catalyzes the attachment of L-aspartate to tRNA(Asp) in a two-step reaction: L-aspartate is first activated by ATP to form Asp-AMP and then transferred to the acceptor end of tRNA(Asp). This chain is Aspartate--tRNA ligase, found in Staphylococcus carnosus (strain TM300).